The sequence spans 468 residues: Aldehyde dehydrogenase family 3 member B1 (468 aa).

The residue at position 1 (M1) is an N-acetylmethionine. Residue G188–G193 participates in NAD(+) binding. Catalysis depends on residues E210 and C244. S-palmitoyl cysteine attachment occurs at residues C462 and C463. The residue at position 465 (C465) is a Cysteine methyl ester. Residue C465 is the site of S-geranylgeranyl cysteine attachment. The propeptide at T466–L468 is removed in mature form.

It belongs to the aldehyde dehydrogenase family. Post-translationally, dually lipidated in the C-terminus; prenylation occurs prior to, and is a prerequisite for palmitoylation. It is also required for activity towards long-chain substrates.

It is found in the cell membrane. It carries out the reaction an aldehyde + NAD(+) + H2O = a carboxylate + NADH + 2 H(+). The enzyme catalyses a long-chain fatty aldehyde + NAD(+) + H2O = a long-chain fatty acid + NADH + 2 H(+). The catalysed reaction is a medium-chain fatty aldehyde + NAD(+) + H2O = a medium-chain fatty acid + NADH + 2 H(+). It catalyses the reaction octanal + NAD(+) + H2O = octanoate + NADH + 2 H(+). It carries out the reaction nonanal + NAD(+) + H2O = nonanoate + NADH + 2 H(+). The enzyme catalyses hexadecanoate + NADH + 2 H(+) = hexadecanal + NAD(+) + H2O. The catalysed reaction is (2E)-octenal + NAD(+) + H2O = (2E)-octenoate + NADH + 2 H(+). It catalyses the reaction (E)-non-2-enal + NAD(+) + H2O = (E)-non-2-enoate + NADH + 2 H(+). It carries out the reaction (E)-4-hydroxynon-2-enal + NAD(+) + H2O = (E)-4-hydroxynon-2-enoate + NADH + 2 H(+). The enzyme catalyses (2E)-hexadecenal + NAD(+) + H2O = (E)-hexadec-2-enoate + NADH + 2 H(+). The catalysed reaction is benzaldehyde + NAD(+) + H2O = benzoate + NADH + 2 H(+). It catalyses the reaction an aldehyde + NADP(+) + H2O = a carboxylate + NADPH + 2 H(+). It carries out the reaction a medium-chain fatty aldehyde + NADP(+) + H2O = a medium-chain fatty acid + NADPH + 2 H(+). The enzyme catalyses hexanal + NADP(+) + H2O = hexanoate + NADPH + 2 H(+). The catalysed reaction is octanal + NADP(+) + H2O = octanoate + NADPH + 2 H(+). It catalyses the reaction nonanal + NADP(+) + H2O = nonanoate + NADPH + 2 H(+). It carries out the reaction (2E)-octenal + NADP(+) + H2O = (2E)-octenoate + NADPH + 2 H(+). The enzyme catalyses (E)-non-2-enal + NADP(+) + H2O = (E)-non-2-enoate + NADPH + 2 H(+). The catalysed reaction is (E)-4-hydroxynon-2-enal + NADP(+) + H2O = (E)-4-hydroxynon-2-enoate + NADPH + 2 H(+). It catalyses the reaction benzaldehyde + NADP(+) + H2O = benzoate + NADPH + 2 H(+). Its pathway is alcohol metabolism; ethanol degradation; acetate from ethanol: step 2/2. In terms of biological role, oxidizes medium and long chain saturated and unsaturated fatty aldehydes generated in the plasma membrane into non-toxic fatty acids. May have a protective role against the cytotoxicity induced by lipid peroxidation. Short-chain fatty aldehydes are not good substrates. Can use both NADP(+) and NAD(+) as electron acceptor in vitro, however in vivo preference will depend on their tissue levels. Low activity towards acetaldehyde and 3,4-dihydroxyphenylacetaldehyde. Able to metabolize aromatic aldehydes such as benzaldehyde to their acid form. The chain is Aldehyde dehydrogenase family 3 member B1 (Aldh3b1) from Rattus norvegicus (Rat).